A 111-amino-acid polypeptide reads, in one-letter code: WAP four-disulfide core domain protein 12 (111 aa).

The N-terminal stretch at 1-23 (MGSSSFLVLTVSLALVTLVAAEG) is a signal peptide. One can recognise a WAP domain in the interval 27-74 (GIEKAGVCPADNVRCFKSDPPQCHTDQDCLGARKCCYLHCGFKCVIPV). Intrachain disulfides connect Cys-34–Cys-62, Cys-41–Cys-66, Cys-49–Cys-61, and Cys-55–Cys-70. Residues 80-111 (GGNKDEDVSGPCPEPGWEAKSPGSSSTGCPQK) form a disordered region. Residues 101–111 (PGSSSTGCPQK) show a composition bias toward polar residues.

Its subcellular location is the secreted. Its function is as follows. Antibacterial protein. Putative acid-stable proteinase inhibitor. This chain is WAP four-disulfide core domain protein 12 (WFDC12), found in Papio anubis (Olive baboon).